Reading from the N-terminus, the 464-residue chain is Cysteine--tRNA ligase (464 aa).

Cysteine 28 contributes to the Zn(2+) binding site. The 'HIGH' region motif lies at 30–40 (PTVYDTAHIGN). Cysteine 212, histidine 237, and glutamate 241 together coordinate Zn(2+). Residues 270-274 (KMSKS) carry the 'KMSKS' region motif. Lysine 273 serves as a coordination point for ATP.

This sequence belongs to the class-I aminoacyl-tRNA synthetase family. In terms of assembly, monomer. It depends on Zn(2+) as a cofactor.

Its subcellular location is the cytoplasm. The catalysed reaction is tRNA(Cys) + L-cysteine + ATP = L-cysteinyl-tRNA(Cys) + AMP + diphosphate. The polypeptide is Cysteine--tRNA ligase (Wolbachia pipientis subsp. Culex pipiens (strain wPip)).